The following is a 148-amino-acid chain: Large-conductance mechanosensitive channel (148 aa).

The next 2 helical transmembrane spans lie at Ala-9–Phe-29 and Ile-79–Ile-99.

The protein belongs to the MscL family. In terms of assembly, homopentamer.

It localises to the cell inner membrane. Its function is as follows. Channel that opens in response to stretch forces in the membrane lipid bilayer. May participate in the regulation of osmotic pressure changes within the cell. The polypeptide is Large-conductance mechanosensitive channel (Pseudomonas syringae pv. tomato (strain ATCC BAA-871 / DC3000)).